Consider the following 134-residue polypeptide: MNTEPTWMAEVVFDENGLIPAIAQDAETGQILMVAWMSREALAETAATGRAVYWSRSRQRLWRKGEESGHAQDVHELRLDCDGDVILLKVHQNGGIACHTGRASCFYRRLEGTASQAEWITIDPVLKDPELIYK.

Residue Asp80 coordinates Mg(2+). Cys81 provides a ligand contact to Zn(2+). Residues Asp82 and Asp84 each coordinate Mg(2+). Residues Cys98 and Cys105 each contribute to the Zn(2+) site.

It belongs to the PRA-CH family. In terms of assembly, homodimer. The cofactor is Mg(2+). Zn(2+) is required as a cofactor.

Its subcellular location is the cytoplasm. It catalyses the reaction 1-(5-phospho-beta-D-ribosyl)-5'-AMP + H2O = 1-(5-phospho-beta-D-ribosyl)-5-[(5-phospho-beta-D-ribosylamino)methylideneamino]imidazole-4-carboxamide. It functions in the pathway amino-acid biosynthesis; L-histidine biosynthesis; L-histidine from 5-phospho-alpha-D-ribose 1-diphosphate: step 3/9. In terms of biological role, catalyzes the hydrolysis of the adenine ring of phosphoribosyl-AMP. This is Phosphoribosyl-AMP cyclohydrolase from Bordetella pertussis (strain Tohama I / ATCC BAA-589 / NCTC 13251).